A 699-amino-acid chain; its full sequence is Serine/threonine-protein kinase PRR2 (699 aa).

Positions 168–193 are disordered; that stretch reads SSTKKNLANDISDNKHNNNSSNTIGH. The span at 184–193 shows a compositional bias: polar residues; sequence NNNSSNTIGH. The Protein kinase domain maps to 361–653; it reads RDLDVVLGEG…INGILQDGWI (293 aa). Residues 367 to 375 and Lys-390 each bind ATP; that span reads LGEGSGGKV. Catalysis depends on Asp-484, which acts as the Proton acceptor.

Belongs to the protein kinase superfamily. Ser/Thr protein kinase family.

The enzyme catalyses L-seryl-[protein] + ATP = O-phospho-L-seryl-[protein] + ADP + H(+). It carries out the reaction L-threonyl-[protein] + ATP = O-phospho-L-threonyl-[protein] + ADP + H(+). In terms of biological role, protein kinase that functions as a regulator in the pheromone-induced mating pathway downstream of mitogen-activated protein kinase (MAPK) FUS3. Diminishes transcriptional induction of genes in response to pheromone signaling. In Saccharomyces cerevisiae (strain ATCC 204508 / S288c) (Baker's yeast), this protein is Serine/threonine-protein kinase PRR2 (PRR2).